A 508-amino-acid polypeptide reads, in one-letter code: GMP synthase [glutamine-hydrolyzing] (508 aa).

In terms of domain architecture, Glutamine amidotransferase type-1 spans 1–189 (MILVLDFGSQ…ALLVCGCEKT (189 aa)). Cysteine 78 (nucleophile) is an active-site residue. Residues histidine 163 and glutamate 165 contribute to the active site. The GMPS ATP-PPase domain maps to 190–383 (WGMQHFAQKE…LGISQDFLMR (194 aa)). 217 to 223 (SGGVDST) serves as a coordination point for ATP.

In terms of assembly, homodimer.

It carries out the reaction XMP + L-glutamine + ATP + H2O = GMP + L-glutamate + AMP + diphosphate + 2 H(+). It functions in the pathway purine metabolism; GMP biosynthesis; GMP from XMP (L-Gln route): step 1/1. Catalyzes the synthesis of GMP from XMP. The protein is GMP synthase [glutamine-hydrolyzing] of Helicobacter pylori (strain Shi470).